A 206-amino-acid polypeptide reads, in one-letter code: Adenylyl-sulfate kinase (206 aa).

Residue 36–43 (GLSGSGKS) participates in ATP binding. The active-site Phosphoserine intermediate is the S110.

The protein belongs to the APS kinase family.

It carries out the reaction adenosine 5'-phosphosulfate + ATP = 3'-phosphoadenylyl sulfate + ADP + H(+). It functions in the pathway sulfur metabolism; hydrogen sulfide biosynthesis; sulfite from sulfate: step 2/3. Functionally, catalyzes the synthesis of activated sulfate. The chain is Adenylyl-sulfate kinase (cysC) from Buchnera aphidicola subsp. Acyrthosiphon pisum (strain APS) (Acyrthosiphon pisum symbiotic bacterium).